The following is a 684-amino-acid chain: Phenoloxidase 1 (684 aa).

Positions 1-50 are cleaved as a propeptide — removed by PPAF1; that stretch reads MSDKNKLLLLFDRPLETVIVPRGPDQEAFDVPVDLLSDRYKAIGVQVSNR. Asn-80 is a glycosylation site (N-linked (GlcNAc...) asparagine). Residues His-208, His-212, and His-237 each contribute to the Cu cation site. Glu-349 acts as the Proton acceptor in catalysis. Asn-352 and Asn-356 each carry an N-linked (GlcNAc...) asparagine glycan. The Cu cation site is built by His-364, His-368, and His-404. 3 N-linked (GlcNAc...) asparagine glycosylation sites follow: Asn-486, Asn-491, and Asn-545. Disulfide bonds link Cys-579–Cys-621 and Cys-581–Cys-628.

It belongs to the tyrosinase family. As to quaternary structure, dimer. Might form a homodimer or a heterodimer with PPO1. Might interact with PPAF2 (via CLIP domain); the interaction might be required for PPO1 activity. It depends on Cu(2+) as a cofactor. In terms of processing, propeptide cleaved by PPAF1. As to expression, hemocytes.

It is found in the secreted. Functionally, this is a copper-containing oxidase that functions in the formation of pigments such as melanins and other polyphenolic compounds. Catalyzes the oxidation of o-diphenols (N-acetyldopamine, 4-methylcatechol and dopamine). Cannot oxidize monophenols and p-phenols (L-tyrosine, tyramine, gentisic acid and hydroquinone). Binds to the surface of hemocytes and is involved in hemocyte melanization. Activation of the enzyme in response to bacterial lipopolysaccharides (LPS) suggests it may play a role in innate immunity. This Holotrichia diomphalia (Korean black chafer) protein is Phenoloxidase 1.